Here is a 512-residue protein sequence, read N- to C-terminus: MEFQIILVVIISALVGLVIGFFIRKNIAEGKITSAEAQAKRILEEAEKNAEGKKREAIVMAKEEVLKLRNEMEREIRDRRNELQRLERRLLQKEETLDRKMDSMEKKEESLSRKEADIENTKAELTNVLNRQLAELERVSGLSSEEARQILLNDVEKELQHDMAVMIKDFENRAKEEADKKARDIISSAIQRCAADHVAEATVAVIPLPNDEMKGRIIGREGRNIRAFETLTGIDLIIDDTPEAVILSGFDPIRREVARLALERLISDGRIHPARIEEMVEKAQKDVEVQIREAGEQATFETGVHGLHPELVKLLGRLKFRTSYGQNVLKHSIEVCHLAGLMAAELGIDVKLAKRAGLLHDIGKAVDHEVEGPHVAIGVNLCQKYKESPEVIHAIAAHHGDEEPRTIEAVLVQAADAISAARPGARRETLESYIKRLQKLEEIAGTFEGVEKSFAIQAGREIRIMVKPDKIDDLAAIRLVRDIAKKIENELDYPGQIKVIIIRETRYVEYAK.

Residues 3–23 (FQIILVVIISALVGLVIGFFI) traverse the membrane as a helical segment. A KH domain is found at 202–265 (TVAVIPLPND…EVARLALERL (64 aa)). One can recognise an HD domain in the interval 328–421 (VLKHSIEVCH…VQAADAISAA (94 aa)).

The protein belongs to the RNase Y family.

The protein resides in the cell membrane. Its function is as follows. Endoribonuclease that initiates mRNA decay. The chain is Ribonuclease Y from Desulforamulus reducens (strain ATCC BAA-1160 / DSM 100696 / MI-1) (Desulfotomaculum reducens).